A 294-amino-acid chain; its full sequence is Xyloglucan endotransglucosylase protein 34 (294 aa).

The first 22 residues, 1–22 (MAAAYPWTLFLGMLVMVSGTMG), serve as a signal peptide directing secretion. Positions 23–221 (AALRKPVDVA…WSKAPFIASY (199 aa)) constitute a GH16 domain. Glu107 functions as the Nucleophile in the catalytic mechanism. Glu111 functions as the Proton donor in the catalytic mechanism. Glu111 provides a ligand contact to xyloglucan. Residue Asn115 is glycosylated (N-linked (GlcNAc...) asparagine). Residues 124-126 (QTN), 134-136 (DRE), 200-201 (DW), and Gly205 contribute to the xyloglucan site. Cystine bridges form between Cys229–Cys238 and Cys275–Cys288. Arg280 is a binding site for xyloglucan.

It belongs to the glycosyl hydrolase 16 family. XTH group 1 subfamily. In terms of processing, contains at least one intrachain disulfide bond essential for its enzymatic activity. Post-translationally, N-glycosylated. Contains N-acetylglucosamine and mannose. Glycosylation is not essential for its catalytic activity. Expressed in mature gelatinous (G) cell wall layer of the tension wood fibers. Highly expressed in the outer zone of the G layer close to the secondary S2 layer. Not expressed in the mature walls of the ray cells or vessel elements (at protein level). Highest expression in both the phloem/cambium and differentiating xylem of the mature stem containing primarily secondary cell wall forming cells, in root tips and young roots. Expressed at low levels in apical bud.

It is found in the secreted. It localises to the cell wall. The protein resides in the extracellular space. The protein localises to the apoplast. Its subcellular location is the cytoplasm. It catalyses the reaction breaks a beta-(1-&gt;4) bond in the backbone of a xyloglucan and transfers the xyloglucanyl segment on to O-4 of the non-reducing terminal glucose residue of an acceptor, which can be a xyloglucan or an oligosaccharide of xyloglucan.. Catalyzes xyloglucan endotransglycosylation (XET). Cleaves and religates xyloglucan polymers. Does not catalyze xyloglucan endohydrolysis (XEH). Involved in early phases of secondary (S) cell wall formation in fibers of the xylem and phloem vascular tissues of wood stems. May play a role in restructuring primary cell walls, possibly creating and reinforcing the connections between the primary and S cell wall layers. Functions in the gelatinous (G) layers of the tension wood fibers that are involved in bending of the wood stems. May play a role in G fiber shrinking by repairing broken xyloglucan cross-links between G and S2 cell wall layers via its XET activity to maintain connections between the layers. The polypeptide is Xyloglucan endotransglucosylase protein 34 (Populus tremula x Populus tremuloides (Hybrid aspen)).